The following is a 493-amino-acid chain: Cobyric acid synthase (493 aa).

Residues 246 to 440 (PIDIAVIKMP…IHGVFDGVAF (195 aa)) enclose the GATase cobBQ-type domain. Cys-326 serves as the catalytic Nucleophile. His-432 is an active-site residue.

This sequence belongs to the CobB/CobQ family. CobQ subfamily.

The protein operates within cofactor biosynthesis; adenosylcobalamin biosynthesis. Functionally, catalyzes amidations at positions B, D, E, and G on adenosylcobyrinic A,C-diamide. NH(2) groups are provided by glutamine, and one molecule of ATP is hydrogenolyzed for each amidation. This chain is Cobyric acid synthase, found in Clostridium botulinum (strain Loch Maree / Type A3).